The following is a 552-amino-acid chain: MKSDSIKKGPGKAAQRSLLKALGLTNEEISRPIIGIVSSQNEIIPGHMNLDKITEAVRKGVLMSGGTPLVVPTIGVCDGIAMGHEGMKYSLVTRELIADSIECMVKAHAFDALVLIPNCDKIVPGMVMAALRVNVPAVVISGGPMLAGKHKGKDISLTTMFEAVGSYENGTMDEKELCDLEECACPTCGSCSGMFTANSMNCLCEVLGIALPGNGTIPAVFSERIRLAKKAGMAVMDMLKNDIKPRDIINERSIMNALKADMALGCSTNSVLHITAIANEAKVNMNLDIINDLSSKTPDLCKLAPASNIHIENLYAAGGITAIMNELSKKDILDLNCITVTGKTQGENIKGVTVKDYEVIRPIDNPYSENGGIAILRGNLAPDGAVVKRAAVLPKMLVHEGPARVFNSEEEANTAIFDKTINPGDVIVIRYEGPKGGPGMREMLQATAAIAGMGLDDSVALITDGRFSGATRGASIGHVSPEAASGGMIGLLENGDIISIDINNAKLEVKLSDEEIKRRKLNFKPLEPKVKEGYLSRYAKLVSSASEGAILK.

D78 provides a ligand contact to Mg(2+). [2Fe-2S] cluster is bound at residue C119. Mg(2+) contacts are provided by D120 and K121. Position 121 is an N6-carboxylysine (K121). C191 serves as a coordination point for [2Fe-2S] cluster. Mg(2+) is bound at residue E442. S468 serves as the catalytic Proton acceptor.

This sequence belongs to the IlvD/Edd family. In terms of assembly, homodimer. The cofactor is [2Fe-2S] cluster. Requires Mg(2+) as cofactor.

The catalysed reaction is (2R)-2,3-dihydroxy-3-methylbutanoate = 3-methyl-2-oxobutanoate + H2O. It carries out the reaction (2R,3R)-2,3-dihydroxy-3-methylpentanoate = (S)-3-methyl-2-oxopentanoate + H2O. It functions in the pathway amino-acid biosynthesis; L-isoleucine biosynthesis; L-isoleucine from 2-oxobutanoate: step 3/4. The protein operates within amino-acid biosynthesis; L-valine biosynthesis; L-valine from pyruvate: step 3/4. In terms of biological role, functions in the biosynthesis of branched-chain amino acids. Catalyzes the dehydration of (2R,3R)-2,3-dihydroxy-3-methylpentanoate (2,3-dihydroxy-3-methylvalerate) into 2-oxo-3-methylpentanoate (2-oxo-3-methylvalerate) and of (2R)-2,3-dihydroxy-3-methylbutanoate (2,3-dihydroxyisovalerate) into 2-oxo-3-methylbutanoate (2-oxoisovalerate), the penultimate precursor to L-isoleucine and L-valine, respectively. The polypeptide is Dihydroxy-acid dehydratase (Clostridium botulinum (strain Alaska E43 / Type E3)).